We begin with the raw amino-acid sequence, 674 residues long: Zyxin (674 aa).

The interval 35–447 (PPKPKVNPFR…PHQDQTSGSQ (413 aa)) is disordered. Over residues 86–109 (LPPPPPNEEPMSPPGSSFPPPPPS) the composition is skewed to pro residues. Over residues 110 to 120 (FGDDGPGSPLG) the composition is skewed to low complexity. 5 stretches are compositionally biased toward pro residues: residues 121 to 148 (LFPP…PPPL), 162 to 180 (ASVP…PAPP), 187 to 209 (KPAP…PPQS), 222 to 240 (KPSP…PPVA), and 254 to 266 (AAPP…PPAP). 2 stretches are compositionally biased toward basic and acidic residues: residues 328–341 (AKHE…KHEA) and 358–387 (QRDK…RGER). 3 consecutive LIM zinc-binding domains span residues 481–542 (ELCG…TLEC), 543–600 (CAVC…RRYA), and 601–671 (PRCT…RARA).

Belongs to the zyxin/ajuba family. As to quaternary structure, interacts (via LIM2 domain) with hesx1/anf1.

It localises to the cytoplasm. The protein localises to the cytoskeleton. Its subcellular location is the cell junction. It is found in the focal adhesion. In terms of biological role, adhesion plaque protein. May be a component of a signal transduction pathway that mediates adhesion-stimulated changes in gene expression. Suppresses the transcription-repressing activity of hesx1/anf1. In Xenopus tropicalis (Western clawed frog), this protein is Zyxin.